The following is a 666-amino-acid chain: tRNA 5-methylaminomethyl-2-thiouridine biosynthesis bifunctional protein MnmC (666 aa).

The interval 1 to 253 (MSSPFVPIIT…KRHMICAHYE (253 aa)) is tRNA (mnm(5)s(2)U34)-methyltransferase. The tract at residues 283–666 (VGGGLAGCFI…FLRKKIIQGP (384 aa)) is FAD-dependent cmnm(5)s(2)U34 oxidoreductase.

This sequence in the N-terminal section; belongs to the methyltransferase superfamily. tRNA (mnm(5)s(2)U34)-methyltransferase family. It in the C-terminal section; belongs to the DAO family. It depends on FAD as a cofactor.

The protein resides in the cytoplasm. It carries out the reaction 5-aminomethyl-2-thiouridine(34) in tRNA + S-adenosyl-L-methionine = 5-methylaminomethyl-2-thiouridine(34) in tRNA + S-adenosyl-L-homocysteine + H(+). Its function is as follows. Catalyzes the last two steps in the biosynthesis of 5-methylaminomethyl-2-thiouridine (mnm(5)s(2)U) at the wobble position (U34) in tRNA. Catalyzes the FAD-dependent demodification of cmnm(5)s(2)U34 to nm(5)s(2)U34, followed by the transfer of a methyl group from S-adenosyl-L-methionine to nm(5)s(2)U34, to form mnm(5)s(2)U34. In Legionella pneumophila subsp. pneumophila (strain Philadelphia 1 / ATCC 33152 / DSM 7513), this protein is tRNA 5-methylaminomethyl-2-thiouridine biosynthesis bifunctional protein MnmC.